The following is a 173-amino-acid chain: Beta-defensin 129 (173 aa).

The N-terminal stretch at 1–19 is a signal peptide; sequence MKLLFPIFASLMLQYKVNT. 3 disulfides stabilise this stretch: Cys-27/Cys-53, Cys-34/Cys-48, and Cys-38/Cys-54. Residues 144 to 173 form a disordered region; it reads STKSNIKESRDSATASPPPAPPPPNTLPTP. Residues 159 to 173 are compositionally biased toward pro residues; the sequence is SPPPAPPPPNTLPTP.

It belongs to the beta-defensin family.

It is found in the secreted. In terms of biological role, has antibacterial activity. This Hylobates lar (Lar gibbon) protein is Beta-defensin 129 (DEFB129).